A 396-amino-acid chain; its full sequence is Flavohemoprotein (396 aa).

Positions 1–136 (MLDAQTIATV…LANVFINREA (136 aa)) constitute a Globin domain. His85 provides a ligand contact to heme b. Catalysis depends on charge relay system residues Tyr95 and Glu135. Residues 147-396 (GGWEGTRDFR…YECFGPHKVL (250 aa)) form a reductase region. The 106-residue stretch at 150–255 (EGTRDFRIVA…VAPAGDFFMA (106 aa)) folds into the FAD-binding FR-type domain. Residues Tyr188 and 204-207 (RQYS) contribute to the FAD site. An NADP(+)-binding site is contributed by 268-273 (GVGQTP). An FAD-binding site is contributed by 389 to 392 (CFGP).

It belongs to the globin family. Two-domain flavohemoproteins subfamily. This sequence in the C-terminal section; belongs to the flavoprotein pyridine nucleotide cytochrome reductase family. Heme b serves as cofactor. The cofactor is FAD.

The enzyme catalyses 2 nitric oxide + NADPH + 2 O2 = 2 nitrate + NADP(+) + H(+). The catalysed reaction is 2 nitric oxide + NADH + 2 O2 = 2 nitrate + NAD(+) + H(+). Functionally, is involved in NO detoxification in an aerobic process, termed nitric oxide dioxygenase (NOD) reaction that utilizes O(2) and NAD(P)H to convert NO to nitrate, which protects the bacterium from various noxious nitrogen compounds. Therefore, plays a central role in the inducible response to nitrosative stress. The sequence is that of Flavohemoprotein from Escherichia coli O6:H1 (strain CFT073 / ATCC 700928 / UPEC).